Consider the following 329-residue polypeptide: o-succinylbenzoate synthase (329 aa).

Lysine 140 (proton donor) is an active-site residue. 3 residues coordinate Mg(2+): aspartate 168, glutamate 197, and aspartate 220. Lysine 242 acts as the Proton acceptor in catalysis.

The protein belongs to the mandelate racemase/muconate lactonizing enzyme family. MenC type 1 subfamily. It depends on a divalent metal cation as a cofactor.

The catalysed reaction is (1R,6R)-6-hydroxy-2-succinyl-cyclohexa-2,4-diene-1-carboxylate = 2-succinylbenzoate + H2O. Its pathway is quinol/quinone metabolism; 1,4-dihydroxy-2-naphthoate biosynthesis; 1,4-dihydroxy-2-naphthoate from chorismate: step 4/7. It participates in quinol/quinone metabolism; menaquinone biosynthesis. Its function is as follows. Converts 2-succinyl-6-hydroxy-2,4-cyclohexadiene-1-carboxylate (SHCHC) to 2-succinylbenzoate (OSB). This chain is o-succinylbenzoate synthase, found in Haemophilus influenzae (strain ATCC 51907 / DSM 11121 / KW20 / Rd).